Reading from the N-terminus, the 357-residue chain is Probable cinnamyl alcohol dehydrogenase 1 (357 aa).

Zn(2+) is bound at residue Cys-47. Thr-49 contacts NADP(+). 7 residues coordinate Zn(2+): His-69, Glu-70, Cys-100, Cys-103, Cys-106, Cys-114, and Cys-163. NADP(+) contacts are provided by residues Thr-167, 188 to 193, 211 to 216, Thr-251, Gly-275, and 298 to 300; these read GLGGVG, SSSNKK, and SFI.

It belongs to the zinc-containing alcohol dehydrogenase family. As to quaternary structure, homodimer. Zn(2+) is required as a cofactor. Post-translationally, the N-terminus is blocked.

It carries out the reaction (E)-cinnamyl alcohol + NADP(+) = (E)-cinnamaldehyde + NADPH + H(+). It catalyses the reaction (E)-coniferol + NADP(+) = (E)-coniferaldehyde + NADPH + H(+). The enzyme catalyses (E)-sinapyl alcohol + NADP(+) = (E)-sinapaldehyde + NADPH + H(+). The catalysed reaction is (E)-4-coumaroyl alcohol + NADP(+) = (E)-4-coumaraldehyde + NADPH + H(+). It carries out the reaction (E)-caffeyl alcohol + NADP(+) = (E)-caffeyl aldehyde + NADPH + H(+). The protein operates within aromatic compound metabolism; phenylpropanoid biosynthesis. Functionally, involved in lignin biosynthesis. Catalyzes the final step specific for the production of lignin monomers. Catalyzes the NADPH-dependent reduction of coniferaldehyde, 5-hydroxyconiferaldehyde, sinapaldehyde, 4-coumaraldehyde and caffeyl aldehyde to their respective alcohols. The sequence is that of Probable cinnamyl alcohol dehydrogenase 1 from Nicotiana tabacum (Common tobacco).